Reading from the N-terminus, the 354-residue chain is UDP-N-acetylglucosamine--N-acetylmuramyl-(pentapeptide) pyrophosphoryl-undecaprenol N-acetylglucosamine transferase (354 aa).

Residues Thr-15–Gly-17, Asn-127, Arg-163, Ser-191, Ile-244, Ala-263–Glu-268, and Gln-288 contribute to the UDP-N-acetyl-alpha-D-glucosamine site.

It belongs to the glycosyltransferase 28 family. MurG subfamily.

The protein localises to the cell inner membrane. The catalysed reaction is di-trans,octa-cis-undecaprenyl diphospho-N-acetyl-alpha-D-muramoyl-L-alanyl-D-glutamyl-meso-2,6-diaminopimeloyl-D-alanyl-D-alanine + UDP-N-acetyl-alpha-D-glucosamine = di-trans,octa-cis-undecaprenyl diphospho-[N-acetyl-alpha-D-glucosaminyl-(1-&gt;4)]-N-acetyl-alpha-D-muramoyl-L-alanyl-D-glutamyl-meso-2,6-diaminopimeloyl-D-alanyl-D-alanine + UDP + H(+). It participates in cell wall biogenesis; peptidoglycan biosynthesis. Functionally, cell wall formation. Catalyzes the transfer of a GlcNAc subunit on undecaprenyl-pyrophosphoryl-MurNAc-pentapeptide (lipid intermediate I) to form undecaprenyl-pyrophosphoryl-MurNAc-(pentapeptide)GlcNAc (lipid intermediate II). This is UDP-N-acetylglucosamine--N-acetylmuramyl-(pentapeptide) pyrophosphoryl-undecaprenol N-acetylglucosamine transferase from Aliivibrio salmonicida (strain LFI1238) (Vibrio salmonicida (strain LFI1238)).